Consider the following 126-residue polypeptide: Allergen Tha p 1 (126 aa).

The signal sequence occupies residues 1-18 (MKLLILALTCAAAVWARP).

It belongs to the insect A10/OS-D protein family.

The protein localises to the secreted. This is Allergen Tha p 1 from Thaumetopoea pityocampa (Pine processionary moth).